The sequence spans 166 residues: MFPMVTEFMNYGQQTVRAARYIGQGFMITLSHANRLPVTIQYPYEKLITSERFRGRIHFEFDKCIACEVCVRVCPIDLPVVDWKLETDIRKKRLLNYSIDFGICIFCGNCVEYCPTNCLSMTEEYELSTYDRHELNYNQIALGRLPMSVIDDYTIRTILNLSEIKT.

2 consecutive 4Fe-4S ferredoxin-type domains span residues 55–84 and 95–124; these read GRIHFEFDKCIACEVCVRVCPIDLPVVDWK and LNYSIDFGICIFCGNCVEYCPTNCLSMTEE. Residues cysteine 64, cysteine 67, cysteine 70, cysteine 74, cysteine 104, cysteine 107, cysteine 110, and cysteine 114 each contribute to the [4Fe-4S] cluster site.

Belongs to the complex I 23 kDa subunit family. NDH is composed of at least 16 different subunits, 5 of which are encoded in the nucleus. Requires [4Fe-4S] cluster as cofactor.

It is found in the plastid. Its subcellular location is the chloroplast thylakoid membrane. The catalysed reaction is a plastoquinone + NADH + (n+1) H(+)(in) = a plastoquinol + NAD(+) + n H(+)(out). It catalyses the reaction a plastoquinone + NADPH + (n+1) H(+)(in) = a plastoquinol + NADP(+) + n H(+)(out). Functionally, NDH shuttles electrons from NAD(P)H:plastoquinone, via FMN and iron-sulfur (Fe-S) centers, to quinones in the photosynthetic chain and possibly in a chloroplast respiratory chain. The immediate electron acceptor for the enzyme in this species is believed to be plastoquinone. Couples the redox reaction to proton translocation, and thus conserves the redox energy in a proton gradient. This is NAD(P)H-quinone oxidoreductase subunit I, chloroplastic from Marshallia caespitosa (Barbara's buttons).